The primary structure comprises 489 residues: UDP-N-acetylmuramate--L-alanine ligase (489 aa).

G128 to T134 serves as a coordination point for ATP.

The protein belongs to the MurCDEF family.

It is found in the cytoplasm. It catalyses the reaction UDP-N-acetyl-alpha-D-muramate + L-alanine + ATP = UDP-N-acetyl-alpha-D-muramoyl-L-alanine + ADP + phosphate + H(+). The protein operates within cell wall biogenesis; peptidoglycan biosynthesis. Its function is as follows. Cell wall formation. The sequence is that of UDP-N-acetylmuramate--L-alanine ligase from Shewanella halifaxensis (strain HAW-EB4).